The primary structure comprises 176 residues: Dual-action ribosomal maturation protein DarP (176 aa).

The protein belongs to the DarP family.

It localises to the cytoplasm. In terms of biological role, member of a network of 50S ribosomal subunit biogenesis factors which assembles along the 30S-50S interface, preventing incorrect 23S rRNA structures from forming. Promotes peptidyl transferase center (PTC) maturation. This Aliivibrio fischeri (strain MJ11) (Vibrio fischeri) protein is Dual-action ribosomal maturation protein DarP.